Here is a 140-residue protein sequence, read N- to C-terminus: RxLR effector protein CRE2 (140 aa).

A signal peptide spans 1 to 24 (MRWLIWTAVSTLVMLLAMTEVSAS). The short motif at 56–72 (RSLRDKSSSLITESEER) is the RxLR-dEER element.

The protein belongs to the RxLR effector family.

It localises to the secreted. The protein resides in the host cell. Its function is as follows. Effector that is involved in host plant infection. Contributes to virulence during the early infection stage, by inhibiting plant defense responses induced by both PAMP-triggered immunity (PTI) and effector-triggered immunity (ETI). This Phytophthora infestans (strain T30-4) (Potato late blight agent) protein is RxLR effector protein CRE2.